The primary structure comprises 308 residues: Transaldolase (308 aa).

Catalysis depends on Lys125, which acts as the Schiff-base intermediate with substrate.

It belongs to the transaldolase family. Type 1 subfamily. In terms of assembly, homodimer.

It localises to the cytoplasm. The catalysed reaction is D-sedoheptulose 7-phosphate + D-glyceraldehyde 3-phosphate = D-erythrose 4-phosphate + beta-D-fructose 6-phosphate. Its pathway is carbohydrate degradation; pentose phosphate pathway; D-glyceraldehyde 3-phosphate and beta-D-fructose 6-phosphate from D-ribose 5-phosphate and D-xylulose 5-phosphate (non-oxidative stage): step 2/3. Its function is as follows. Transaldolase is important for the balance of metabolites in the pentose-phosphate pathway. This is Transaldolase from Pseudomonas savastanoi pv. phaseolicola (strain 1448A / Race 6) (Pseudomonas syringae pv. phaseolicola (strain 1448A / Race 6)).